Reading from the N-terminus, the 355-residue chain is MSRYWSDIVQQLVPYVPGEQPALAHPVKLNTNENPYPPSPRVVAAIARELGETGDTLRRYPDPVARALRETVATHHRIKPEQVFVGNGSDEVLAHTFQALLKHDRPLRFPDITYSFYPTYARLYGVQTSNVPLADDFSIRVDDYLDDAGGVLFPNPNAPTGRALPLADVERIVAANPSSVVVIDEAYVDFGAQSAITLIDRYPNLLVVHTTSKARSLAGMRVGFAFGEAALIDALNRVKDSFNSYPLDRLAQVAAQAAYEDTDYFNATCRRVIDSRTRLTHALDALDFNIVPSAANFVFARHPAHDAGAIAAKLKEREIFVRHFRLPRIDQHLRITVGTDAECDALVAALRELLA.

N6-(pyridoxal phosphate)lysine is present on Lys213.

This sequence belongs to the class-II pyridoxal-phosphate-dependent aminotransferase family. Histidinol-phosphate aminotransferase subfamily. In terms of assembly, homodimer. Requires pyridoxal 5'-phosphate as cofactor.

The enzyme catalyses L-histidinol phosphate + 2-oxoglutarate = 3-(imidazol-4-yl)-2-oxopropyl phosphate + L-glutamate. The protein operates within amino-acid biosynthesis; L-histidine biosynthesis; L-histidine from 5-phospho-alpha-D-ribose 1-diphosphate: step 7/9. The polypeptide is Histidinol-phosphate aminotransferase 2 (Burkholderia lata (strain ATCC 17760 / DSM 23089 / LMG 22485 / NCIMB 9086 / R18194 / 383)).